The chain runs to 639 residues: Chaperone protein DnaK (639 aa).

At T198 the chain carries Phosphothreonine; by autocatalysis. The interval 601-639 (AQQAPGADSCGGDCGQQQEAGAKPKDEKVVDADFEEVKK) is disordered. Basic and acidic residues predominate over residues 622–639 (AKPKDEKVVDADFEEVKK).

It belongs to the heat shock protein 70 family.

In terms of biological role, acts as a chaperone. This Trichlorobacter lovleyi (strain ATCC BAA-1151 / DSM 17278 / SZ) (Geobacter lovleyi) protein is Chaperone protein DnaK.